A 160-amino-acid polypeptide reads, in one-letter code: Protein MGF 300-2R (160 aa).

Belongs to the asfivirus MGF 300 family.

Functionally, plays a role in virus cell tropism, and may be required for efficient virus replication in macrophages. In African swine fever virus (isolate Pig/Kenya/KEN-50/1950) (ASFV), this protein is Protein MGF 300-2R.